A 209-amino-acid polypeptide reads, in one-letter code: Uracil phosphoribosyltransferase (209 aa).

5-phospho-alpha-D-ribose 1-diphosphate contacts are provided by residues Arg79, Arg104, and 131 to 139 (DPMLATGGS). Uracil contacts are provided by residues Ile194 and 199-201 (GDA). Asp200 serves as a coordination point for 5-phospho-alpha-D-ribose 1-diphosphate.

It belongs to the UPRTase family. The cofactor is Mg(2+).

The catalysed reaction is UMP + diphosphate = 5-phospho-alpha-D-ribose 1-diphosphate + uracil. Its pathway is pyrimidine metabolism; UMP biosynthesis via salvage pathway; UMP from uracil: step 1/1. Allosterically activated by GTP. Catalyzes the conversion of uracil and 5-phospho-alpha-D-ribose 1-diphosphate (PRPP) to UMP and diphosphate. The chain is Uracil phosphoribosyltransferase from Streptococcus pneumoniae serotype 4 (strain ATCC BAA-334 / TIGR4).